The following is a 368-amino-acid chain: tRNA(Met) cytidine acetate ligase (368 aa).

ATP is bound by residues 7-20 (IAEF…HKYL), G96, N152, and R175.

This sequence belongs to the TmcAL family.

It localises to the cytoplasm. It carries out the reaction cytidine(34) in elongator tRNA(Met) + acetate + ATP = N(4)-acetylcytidine(34) in elongator tRNA(Met) + AMP + diphosphate. In terms of biological role, catalyzes the formation of N(4)-acetylcytidine (ac(4)C) at the wobble position of elongator tRNA(Met), using acetate and ATP as substrates. First activates an acetate ion to form acetyladenylate (Ac-AMP) and then transfers the acetyl group to tRNA to form ac(4)C34. This chain is tRNA(Met) cytidine acetate ligase, found in Streptococcus pyogenes serotype M28 (strain MGAS6180).